Reading from the N-terminus, the 472-residue chain is P2X purinoceptor 2 (472 aa).

Residues 1–34 (MVRRLARGCWSAFWDYETPKVIVVRNRRLGFVHR) lie on the Cytoplasmic side of the membrane. 6 cysteine pairs are disulfide-bonded: Cys-9–Cys-430, Cys-113–Cys-164, Cys-124–Cys-147, Cys-130–Cys-158, Cys-214–Cys-224, and Cys-258–Cys-267. The helical transmembrane segment at 35-52 (MVQLLILLYFVWYVFIVQ) threads the bilayer. The Extracellular segment spans residues 53-326 (KSYQDSETGP…IVHGQAGKFS (274 aa)). Lys-69 and Lys-71 together coordinate ATP. N-linked (GlcNAc...) asparagine glycosylation occurs at Asn-182. ATP is bound at residue Thr-184. Asn-239 carries N-linked (GlcNAc...) asparagine glycosylation. The ATP site is built by Ser-284, Asn-288, and Arg-290. The N-linked (GlcNAc...) asparagine glycan is linked to Asn-298. Lys-308 contacts ATP. Positions 309-322 (AYGIRIDVIVHGQA) are pore-forming motif. Residues 327 to 347 (LIPTIINLATALTSIGVGSFL) form a helical membrane-spanning segment. Topologically, residues 348–472 (CDWILLTFMN…STDPKGLAQL (125 aa)) are cytoplasmic. A disordered region spans residues 393 to 472 (PPPSHYSQDQ…STDPKGLAQL (80 aa)). The span at 456–465 (PSQQDSTSTD) shows a compositional bias: polar residues.

It belongs to the P2X receptor family. As to quaternary structure, homotrimer and heterotrimer; functional P2XRs are organized as homomeric and heteromeric trimers. Homotrimer. Forms heterotrimer with P2RX1. Forms heterotrimer with P2RX6. Forms heterotrimer with P2RX3. As to expression, high levels in pituitary and vas deferens. Lower extent in spinal cord, bladder, brain, adrenal, testis, sensory epithelia from the inner ear.

Its subcellular location is the cell membrane. It carries out the reaction Ca(2+)(in) = Ca(2+)(out). It catalyses the reaction K(+)(in) = K(+)(out). The catalysed reaction is Na(+)(in) = Na(+)(out). Fast activation by external ATP. Exhibits slow desensitization during prolonged ATP activation. Not sensitive to the ATP agonist:alpha/beta-methylene-ATP. In terms of biological role, ATP-gated nonselective transmembrane cation channel permeable to potassium, sodium and calcium. Activation by extracellular ATP induces a variety of cellular responses, such as excitatory postsynaptic responses in sensory neurons, neuromuscular junctions (NMJ) formation, hearing, perception of taste and peristalsis. In the inner ear, regulates sound transduction and auditory neurotransmission, outer hair cell electromotility, inner ear gap junctions, and K(+) recycling. Mediates synaptic transmission between neurons and from neurons to smooth muscle. The sequence is that of P2X purinoceptor 2 (P2rx2) from Rattus norvegicus (Rat).